The primary structure comprises 33 residues: Actin (33 aa).

This sequence belongs to the actin family.

The protein resides in the cytoplasm. It localises to the cytoskeleton. It catalyses the reaction ATP + H2O = ADP + phosphate + H(+). Functionally, actins are highly conserved proteins that are involved in various types of cell motility and are ubiquitously expressed in all eukaryotic cells. In Dictyocaulus viviparus (Bovine lungworm), this protein is Actin.